The following is a 131-amino-acid chain: Cystatin-like cysteine protease inhibitor EPIC3 (131 aa).

The signal sequence occupies residues 1–22; sequence MAFTRSIALFAGLALAASSAQG. Asn-33 carries an N-linked (GlcNAc...) asparagine glycan. Positions 71-75 match the Secondary area of contact motif; the sequence is QTVAG.

Belongs to the cystatin family.

It is found in the secreted. In terms of biological role, secreted effector that interacts with and inhibits host apoplastic pathogenesis-related papain-like cysteine proteases. Inhibition of host proteases by a pathogen extracellular protease inhibitor forms a specific type of defense-counterdefense mechanism between plants and microbial pathogens. The polypeptide is Cystatin-like cysteine protease inhibitor EPIC3 (Phytophthora infestans (strain T30-4) (Potato late blight agent)).